A 685-amino-acid polypeptide reads, in one-letter code: Invasion protein InvA (685 aa).

8 helical membrane passes run 17 to 37, 39 to 59, 61 to 81, 110 to 130, 197 to 217, 235 to 255, 274 to 294, and 295 to 315; these read ILVLMVMIISMFVIPLPTYLV, FLIALNIVLAILVFMGSFYID, ILSFSTFPAVLLITTLFRLAL, SLAVGFVVFSIVTVVQFIVIT, AIAGIIIIFVNFIGGISVGMT, IGDGLVAQIPALLIAISAGFI, LLNNPFVLVVTAILTISMGTL, and PGFPLPVFVILSVVLSVLFYF.

This sequence belongs to the FHIPEP (flagella/HR/invasion proteins export pore) family.

It localises to the cell inner membrane. Functionally, involved in the invasion of the cells of the intestinal epithelium. Could be involved in the translocation of the InvE protein. In Salmonella typhi, this protein is Invasion protein InvA (invA).